A 506-amino-acid chain; its full sequence is UDP-N-acetylmuramoyl-L-alanyl-D-glutamate--2,6-diaminopimelate ligase (506 aa).

UDP-N-acetyl-alpha-D-muramoyl-L-alanyl-D-glutamate is bound at residue Ser38. Residue 124–130 coordinates ATP; it reads GTNGKTS. UDP-N-acetyl-alpha-D-muramoyl-L-alanyl-D-glutamate contacts are provided by residues 166–167, Ser193, and Arg201; that span reads TT. Lys233 carries the N6-carboxylysine modification. Residues Arg401, 425-428, Gly477, and Glu481 contribute to the meso-2,6-diaminopimelate site; that span reads DNPR. The short motif at 425–428 is the Meso-diaminopimelate recognition motif element; the sequence is DNPR.

It belongs to the MurCDEF family. MurE subfamily. Requires Mg(2+) as cofactor. Post-translationally, carboxylation is probably crucial for Mg(2+) binding and, consequently, for the gamma-phosphate positioning of ATP.

The protein resides in the cytoplasm. The enzyme catalyses UDP-N-acetyl-alpha-D-muramoyl-L-alanyl-D-glutamate + meso-2,6-diaminopimelate + ATP = UDP-N-acetyl-alpha-D-muramoyl-L-alanyl-gamma-D-glutamyl-meso-2,6-diaminopimelate + ADP + phosphate + H(+). It functions in the pathway cell wall biogenesis; peptidoglycan biosynthesis. Functionally, catalyzes the addition of meso-diaminopimelic acid to the nucleotide precursor UDP-N-acetylmuramoyl-L-alanyl-D-glutamate (UMAG) in the biosynthesis of bacterial cell-wall peptidoglycan. The protein is UDP-N-acetylmuramoyl-L-alanyl-D-glutamate--2,6-diaminopimelate ligase of Leptospira interrogans serogroup Icterohaemorrhagiae serovar copenhageni (strain Fiocruz L1-130).